The chain runs to 185 residues: dCTP deaminase (185 aa).

Residues 107–112, 131–133, Gln-152, Tyr-166, and Gln-176 contribute to the dCTP site; these read KSTYAR and TLE. Glu-133 (proton donor/acceptor) is an active-site residue.

This sequence belongs to the dCTP deaminase family. As to quaternary structure, homotrimer.

It catalyses the reaction dCTP + H2O + H(+) = dUTP + NH4(+). It functions in the pathway pyrimidine metabolism; dUMP biosynthesis; dUMP from dCTP (dUTP route): step 1/2. Functionally, catalyzes the deamination of dCTP to dUTP. The sequence is that of dCTP deaminase from Wolbachia sp. subsp. Brugia malayi (strain TRS).